The following is a 151-amino-acid chain: SsrA-binding protein (151 aa).

Residues glycine 121–alanine 151 form a disordered region. A compositionally biased stretch (basic and acidic residues) spans aspartate 126–arginine 142.

This sequence belongs to the SmpB family.

The protein resides in the cytoplasm. Its function is as follows. Required for rescue of stalled ribosomes mediated by trans-translation. Binds to transfer-messenger RNA (tmRNA), required for stable association of tmRNA with ribosomes. tmRNA and SmpB together mimic tRNA shape, replacing the anticodon stem-loop with SmpB. tmRNA is encoded by the ssrA gene; the 2 termini fold to resemble tRNA(Ala) and it encodes a 'tag peptide', a short internal open reading frame. During trans-translation Ala-aminoacylated tmRNA acts like a tRNA, entering the A-site of stalled ribosomes, displacing the stalled mRNA. The ribosome then switches to translate the ORF on the tmRNA; the nascent peptide is terminated with the 'tag peptide' encoded by the tmRNA and targeted for degradation. The ribosome is freed to recommence translation, which seems to be the essential function of trans-translation. This is SsrA-binding protein from Chromobacterium violaceum (strain ATCC 12472 / DSM 30191 / JCM 1249 / CCUG 213 / NBRC 12614 / NCIMB 9131 / NCTC 9757 / MK).